The chain runs to 545 residues: Chaperonin GroEL 1 (545 aa).

ATP-binding positions include 29 to 32 (TLGP), 86 to 90 (DGTTT), glycine 413, 479 to 481 (DAA), and aspartate 495. The tract at residues 525-545 (PEPKENNPAGSGAGMGGDFDY) is disordered. A compositionally biased stretch (gly residues) spans 535–545 (SGAGMGGDFDY).

Belongs to the chaperonin (HSP60) family. Forms a cylinder of 14 subunits composed of two heptameric rings stacked back-to-back. Interacts with the co-chaperonin GroES.

Its subcellular location is the cytoplasm. It carries out the reaction ATP + H2O + a folded polypeptide = ADP + phosphate + an unfolded polypeptide.. Its function is as follows. Together with its co-chaperonin GroES, plays an essential role in assisting protein folding. The GroEL-GroES system forms a nano-cage that allows encapsulation of the non-native substrate proteins and provides a physical environment optimized to promote and accelerate protein folding. In Thermostichus vulcanus (Synechococcus vulcanus), this protein is Chaperonin GroEL 1.